The sequence spans 135 residues: Protein PsiE homolog (135 aa).

4 consecutive transmembrane segments (helical) span residues 20–40 (VGLI…TIHL), 54–74 (YMLI…ALIV), 82–102 (HFPL…LIIV), and 107–127 (PIDT…LYLA).

Belongs to the PsiE family.

The protein localises to the cell inner membrane. The chain is Protein PsiE homolog from Yersinia pestis (strain Pestoides F).